Here is a 290-residue protein sequence, read N- to C-terminus: Multiple sugar-binding transport system permease protein MsmF (290 aa).

A run of 7 helical transmembrane segments spans residues Gly12–Phe32, Phe72–Ala92, Phe104–Phe124, Val156–Leu176, Phe201–Leu221, Ile231–Tyr253, and Tyr260–Leu280. In terms of domain architecture, ABC transmembrane type-1 spans Ile70 to Gln281.

Belongs to the binding-protein-dependent transport system permease family. MalFG subfamily.

The protein localises to the cell membrane. In terms of biological role, involved in a binding protein-dependent transport system responsible for the uptake of melibiose, raffinose and isomaltotriose. This is Multiple sugar-binding transport system permease protein MsmF (msmF) from Streptococcus mutans serotype c (strain ATCC 700610 / UA159).